The following is a 91-amino-acid chain: C-C motif chemokine 5 (91 aa).

Residues 1–23 (MKVSATAFAVLLMAAALCAPASA) form the signal peptide. Intrachain disulfides connect cysteine 33/cysteine 57 and cysteine 34/cysteine 73.

Belongs to the intercrine beta (chemokine CC) family.

It localises to the secreted. Chemoattractant for blood monocytes, memory T-helper cells and eosinophils. Causes the release of histamine from basophils and activates eosinophils. May activate several chemokine receptors including CCR1, CCR3, CCR4 and CCR5. May also be an agonist of the G protein-coupled receptor GPR75. Together with GPR75, may play a role in neuron survival through activation of a downstream signaling pathway involving the PI3, Akt and MAP kinases. By activating GPR75 may also play a role in insulin secretion by islet cells. In Bos taurus (Bovine), this protein is C-C motif chemokine 5 (CCL5).